Here is a 172-residue protein sequence, read N- to C-terminus: Crossover junction endodeoxyribonuclease RuvC (172 aa).

Residues D11, E71, and D143 contribute to the active site. Positions 11, 71, and 143 each coordinate Mg(2+).

This sequence belongs to the RuvC family. In terms of assembly, homodimer which binds Holliday junction (HJ) DNA. The HJ becomes 2-fold symmetrical on binding to RuvC with unstacked arms; it has a different conformation from HJ DNA in complex with RuvA. In the full resolvosome a probable DNA-RuvA(4)-RuvB(12)-RuvC(2) complex forms which resolves the HJ. It depends on Mg(2+) as a cofactor.

The protein resides in the cytoplasm. The enzyme catalyses Endonucleolytic cleavage at a junction such as a reciprocal single-stranded crossover between two homologous DNA duplexes (Holliday junction).. In terms of biological role, the RuvA-RuvB-RuvC complex processes Holliday junction (HJ) DNA during genetic recombination and DNA repair. Endonuclease that resolves HJ intermediates. Cleaves cruciform DNA by making single-stranded nicks across the HJ at symmetrical positions within the homologous arms, yielding a 5'-phosphate and a 3'-hydroxyl group; requires a central core of homology in the junction. The consensus cleavage sequence is 5'-(A/T)TT(C/G)-3'. Cleavage occurs on the 3'-side of the TT dinucleotide at the point of strand exchange. HJ branch migration catalyzed by RuvA-RuvB allows RuvC to scan DNA until it finds its consensus sequence, where it cleaves and resolves the cruciform DNA. In Brucella anthropi (strain ATCC 49188 / DSM 6882 / CCUG 24695 / JCM 21032 / LMG 3331 / NBRC 15819 / NCTC 12168 / Alc 37) (Ochrobactrum anthropi), this protein is Crossover junction endodeoxyribonuclease RuvC.